Consider the following 78-residue polypeptide: MAQPDSSSLAEVLDRVLDKGVVVDVYARLSLVGIEILTVEARVVAASVDTFLHYAEEIAKIEQAELTAGAEAAPTPEA.

It belongs to the gas vesicle GvpA family. In terms of assembly, the gas vesicle shell is 2 nm thick and consists of a single layer of this protein. It forms helical ribs nearly perpendicular to the long axis of the vesicle.

It is found in the gas vesicle shell. Functionally, gas vesicles are hollow, gas filled proteinaceous nanostructures found in some microorganisms. During planktonic growth they allow positioning of the organism at a favorable depth for light or nutrient acquisition. GvpA forms the protein shell. The sequence is that of Gas vesicle protein A from Halorubrum vacuolatum (Natronobacterium vacuolatum).